The following is a 162-amino-acid chain: MQFDVTIEIPKGQRNKYEVDHETGRVRLDRYLYTPMAYPTDYGFIEDTLGDDGDPLDALVLLPQPVFPGVLVAARPVGMFRMVDEHGGDDKVLCVPAGDPRWDHVQDIGDVPAFELDAIKHFFVHYKDLEPGKFVKAADWVDRAEAEAEVQRSVERFKAGTH.

Glu8 serves as a coordination point for Mg(2+). Positions 16, 30, and 42 each coordinate substrate. Positions 52, 57, 84, and 89 each coordinate Mg(2+). Asp89 functions as the Proton acceptor in the catalytic mechanism. Tyr126 contributes to the substrate binding site.

Belongs to the PPase family. As to quaternary structure, homohexamer. Requires Mg(2+) as cofactor.

The protein localises to the cytoplasm. The enzyme catalyses diphosphate + H2O = 2 phosphate + H(+). Functionally, catalyzes the hydrolysis of inorganic pyrophosphate (PPi) forming two phosphate ions. This is Inorganic pyrophosphatase from Mycobacterium bovis (strain ATCC BAA-935 / AF2122/97).